The primary structure comprises 569 residues: Protein GPR108 (569 aa).

Positions 1–34 (MAVSERRGLSGESPTQCRWGYLSLLVLTLSGCSG) are cleaved as a signal peptide. Residues N59, N111, and N182 are each glycosylated (N-linked (GlcNAc...) asparagine). A disordered region spans residues 144 to 219 (LLPEAPTQSG…DPSGKEKDQV (76 aa)). A compositionally biased stretch (polar residues) spans 180-192 (KENQTAPQVSGDK). Over residues 194–203 (TPGEHRHSSE) the composition is skewed to basic and acidic residues. N-linked (GlcNAc...) asparagine glycans are attached at residues N226 and N230. A run of 7 helical transmembrane segments spans residues 289–309 (LYLI…SVLC), 318–338 (IHWL…FHSI), 362–382 (LLKG…WAFV), 393–413 (IFGI…VIES), 427–447 (ILFL…VWSI), 475–495 (VMVI…QVAV), and 499–519 (WQWL…VLTG).

It belongs to the LU7TM family. High expression in spleen, lung, stomach, large and small intestine, and thymus.

It localises to the golgi apparatus. The protein resides in the cis-Golgi network membrane. The protein localises to the trans-Golgi network membrane. Its subcellular location is the golgi apparatus membrane. In terms of biological role, may play a role in intracellular immune modulation by activating NF-kappaB response and attenuating Toll-like-receptor response. (Microbial infection) Plays an essential function in adeno-associated virus (AAV) transduction, across multiple serotypes except AAV5. May play a critical role in mediating the endosomal virus escape or in the AAV virions trafficking from endosomes to the nucleus. The chain is Protein GPR108 (Gpr108) from Mus musculus (Mouse).